The chain runs to 161 residues: Eukaryotic translation initiation factor 5A-2 (161 aa).

At lysine 54 the chain carries Hypusine.

Belongs to the eIF-5A family. In terms of processing, lys-54 undergoes hypusination, a unique post-translational modification that consists in the addition of a butylamino group from spermidine to lysine side chain and leads to the formation of a hypusine residue. eIF-5As are the only known proteins to undergo this modification, which is essential for their function. As to expression, expressed in the somatic tissues.

Its subcellular location is the cytoplasm. Its function is as follows. Translation factor that promotes translation elongation and termination, particularly upon ribosome stalling at specific amino acid sequence contexts. Binds between the exit (E) and peptidyl (P) site of the ribosome and promotes rescue of stalled ribosome: specifically required for efficient translation of polyproline-containing peptides as well as other motifs that stall the ribosome. Acts as a ribosome quality control (RQC) cofactor by joining the RQC complex to facilitate peptidyl transfer during CAT tailing step. Acts in somatic tissues and its function in the soma is essential for normal growth and reproduction. In Caenorhabditis elegans, this protein is Eukaryotic translation initiation factor 5A-2 (iff-2).